Here is a 66-residue protein sequence, read N- to C-terminus: Beta-toxin ChFII.9 (66 aa).

The region spanning 1–66 (KEGYIVDYHT…VWPLPNKRCK (66 aa)) is the LCN-type CS-alpha/beta domain. 4 cysteine pairs are disulfide-bonded: Cys-12–Cys-65, Cys-16–Cys-41, Cys-25–Cys-46, and Cys-29–Cys-48. Lys-66 carries the post-translational modification Lysine amide.

In terms of tissue distribution, expressed by the venom gland.

It localises to the secreted. In terms of biological role, beta toxins bind voltage independently at site-4 of sodium channels (Nav) and shift the activation voltage toward more negative potentials, thereby affecting sodium channel activation CC and promoting spontaneous and repetitive firing. The protein is Beta-toxin ChFII.9 of Centruroides hirsutipalpus (Scorpion).